The sequence spans 545 residues: External NADH-ubiquinone oxidoreductase 2, mitochondrial (545 aa).

Residues 1–21 constitute a mitochondrion transit peptide; it reads MLPRLGFARTARSIHRFKMTQ. An FAD-binding site is contributed by 99 to 129; the sequence is ELVILGTGWGAISLLKKLDTSLYNVTVVSPR. 260–296 contributes to the NAD(+) binding site; it reads LTFVVVGGGPTGVEFAAELQDYINQDLRKWMPDLSKE.

Belongs to the NADH dehydrogenase family.

The protein resides in the mitochondrion intermembrane space. It catalyses the reaction a quinone + NADH + H(+) = a quinol + NAD(+). The enzyme catalyses a ubiquinone + NADH + H(+) = a ubiquinol + NAD(+). Its function is as follows. External NADH dehydrogenase required for optimum cellular growth with a number of nonfermentable carbon sources, including ethanol. With NDE1, performes the mitochondrial oxidation of cytosolic NADH under these growth conditions. Regulates the mitochondrial glycerol-3-phosphate dehydrogenase, GUT2, also involved in cytosolic NADH oxidation. This is External NADH-ubiquinone oxidoreductase 2, mitochondrial (NDE2) from Saccharomyces cerevisiae (strain ATCC 204508 / S288c) (Baker's yeast).